The primary structure comprises 325 residues: Diaminopimelate epimerase (325 aa).

Substrate-binding residues include N11 and N69. The active-site Proton donor is the C78. Substrate contacts are provided by residues 79 to 80, N166, N203, and 221 to 222; these read GN and ER. Catalysis depends on C230, which acts as the Proton acceptor. 231–232 serves as a coordination point for substrate; sequence GT.

This sequence belongs to the diaminopimelate epimerase family. As to quaternary structure, homodimer.

It localises to the cytoplasm. It catalyses the reaction (2S,6S)-2,6-diaminopimelate = meso-2,6-diaminopimelate. Its pathway is amino-acid biosynthesis; L-lysine biosynthesis via DAP pathway; DL-2,6-diaminopimelate from LL-2,6-diaminopimelate: step 1/1. Catalyzes the stereoinversion of LL-2,6-diaminopimelate (L,L-DAP) to meso-diaminopimelate (meso-DAP), a precursor of L-lysine and an essential component of the bacterial peptidoglycan. This Ligilactobacillus salivarius (strain UCC118) (Lactobacillus salivarius) protein is Diaminopimelate epimerase.